We begin with the raw amino-acid sequence, 334 residues long: Glyoxylate reductase (334 aa).

Residues 158-161, 180-182, and 239-241 contribute to the NADP(+) site; these read FGRI, SRT, and IAR. Catalysis depends on residues Arg-241 and Glu-270. Catalysis depends on His-288, which acts as the Proton donor. 288–290 lines the NADP(+) pocket; that stretch reads HIG.

This sequence belongs to the D-isomer specific 2-hydroxyacid dehydrogenase family. GyaR subfamily. Homodimer.

It is found in the cytoplasm. The enzyme catalyses glycolate + NAD(+) = glyoxylate + NADH + H(+). The chain is Glyoxylate reductase from Thermococcus gammatolerans (strain DSM 15229 / JCM 11827 / EJ3).